Reading from the N-terminus, the 287-residue chain is Survival motor neuron protein (287 aa).

The segment at 1–28 is disordered; it reads MGGGGGGFPEPEDSVLFRRGTGESDDSD. Residues 9 to 40 form a P1 (binding site for GEMIN2) region; the sequence is PEPEDSVLFRRGTGESDDSDVWDDTALIKAYD. The residue at position 21 (Thr21) is a Phosphothreonine. 2 positions are modified to phosphoserine: Ser24 and Ser27. Residue Lys47 forms a Glycyl lysine isopeptide (Lys-Gly) (interchain with G-Cter in SUMO2) linkage. Disordered stretches follow at residues 51–86 and 149–221; these read KNGD…PSKQ and NAQE…PPPH. Residues 64 to 77 are compositionally biased toward basic residues; the sequence is GTPKRKSAKNKSQR. Thr65 bears the Phosphothreonine mark. Thr80 carries the phosphothreonine; by PKA modification. Residues 86–146 enclose the Tudor domain; it reads QWKVGDNCCA…LSPTSEVANI (61 aa). The tract at residues 92-204 is required for interaction with RPP20/POP7; the sequence is NCCAIWSEDG…MPRSGLGPGK (113 aa). Positions 149–160 are enriched in low complexity; it reads NAQENENESQIS. The segment covering 167-179 has biased composition (polar residues); that stretch reads SSRSPLNKPNNIR. Residue Lys204 forms a Glycyl lysine isopeptide (Lys-Gly) (interchain with G-Cter in SUMO2) linkage. Positions 211-221 are enriched in pro residues; the sequence is GPPPPPPPPPH. Positions 234–261 are P2 (binding site for SM B); sequence PPMIPPPPPICPDSLDDADALGSMLISW. The tract at residues 273 to 287 is required for interaction with SYNCRIP; that stretch reads GFKQSQKEGRYSHFN.

This sequence belongs to the SMN family. Homooligomer; may form higher order homooligomers in the dimer to octamer range. Part of the core SMN complex that contains SMN1, GEMIN2/SIP1, DDX20/GEMIN3, GEMIN4, GEMIN5, GEMIN6, GEMIN7, GEMIN8 and STRAP/UNRIP. Part of the SMN-Sm complex that contains SMN1, GEMIN2/SIP1, DDX20/GEMIN3, GEMIN4, GEMIN5, GEMIN6, GEMIN7, GEMIN8, STRAP/UNRIP and the Sm proteins SNRPB, SNRPD1, SNRPD2, SNRPD3, SNRPE, SNRPF and SNRPG. Component of an import snRNP complex composed of KPNB1, RNUT1, SMN1 and ZNF259. Interacts with DDX20, FBL, NOLA1, RNUT1, SYNCRIP and with several spliceosomal snRNP core Sm proteins, including SNRPB, SNRPD1, SNRPD2, SNRPD3, SNRPE and ILF3. Interacts with GEMIN2; the interaction is direct. Interacts with GEMIN3; the interaction is direct. Interacts with GEMIN8; the interaction is direct. Interacts with SNRPB; the interaction is direct. Interacts (via Tudor domain) with SNRPD1 (via C-terminus); the interaction is direct. Interacts with SNRPD2; the interaction is direct. Interacts (via Tudor domain) with SNRPD3 (via C-terminus); the interaction is direct. Interacts with SNRPE; the interaction is direct. Interacts with OSTF1, LSM10, LSM11 and RPP20/POP7. Interacts (via C-terminal region) with ZPR1 (via C-terminal region). Interacts (via Tudor domain) with COIL. Interacts with SETX; recruits SETX to POLR2A. Interacts with POLR2A (via the C-terminal domain (CTD)). Interacts with PRMT5. Interacts with XRN2. Interacts (via C-terminus) with FMR1 (via C-terminus); the interaction is direct and occurs in a RNA-independent manner. Interacts (via Tudor domain) with SF3B2 ('Arg-508'-methylated form). Interacts with WRAP53/TCAB1. Interacts (via Tudor domain) with ELAVL4 in an RNA-independent manner; the interaction is required for localization of ELAVL4 to RNA granules. Interacts with FRG1.

It localises to the nucleus. It is found in the gem. The protein resides in the cajal body. The protein localises to the cytoplasm. Its subcellular location is the cytoplasmic granule. It localises to the perikaryon. It is found in the cell projection. The protein resides in the neuron projection. The protein localises to the axon. Its subcellular location is the myofibril. It localises to the sarcomere. It is found in the z line. In terms of biological role, the SMN complex catalyzes the assembly of small nuclear ribonucleoproteins (snRNPs), the building blocks of the spliceosome, and thereby plays an important role in the splicing of cellular pre-mRNAs. Most spliceosomal snRNPs contain a common set of Sm proteins SNRPB, SNRPD1, SNRPD2, SNRPD3, SNRPE, SNRPF and SNRPG that assemble in a heptameric protein ring on the Sm site of the small nuclear RNA to form the core snRNP (Sm core). In the cytosol, the Sm proteins SNRPD1, SNRPD2, SNRPE, SNRPF and SNRPG are trapped in an inactive 6S pICln-Sm complex by the chaperone CLNS1A that controls the assembly of the core snRNP. To assemble core snRNPs, the SMN complex accepts the trapped 5Sm proteins from CLNS1A forming an intermediate. Binding of snRNA inside 5Sm ultimately triggers eviction of the SMN complex, thereby allowing binding of SNRPD3 and SNRPB to complete assembly of the core snRNP. Within the SMN complex, SMN1 acts as a structural backbone and together with GEMIN2 it gathers the Sm complex subunits. Ensures the correct splicing of U12 intron-containing genes that may be important for normal motor and proprioceptive neurons development. Also required for resolving RNA-DNA hybrids created by RNA polymerase II, that form R-loop in transcription terminal regions, an important step in proper transcription termination. May also play a role in the metabolism of small nucleolar ribonucleoprotein (snoRNPs). In Bos taurus (Bovine), this protein is Survival motor neuron protein (SMN1).